Here is a 124-residue protein sequence, read N- to C-terminus: Ribonuclease pancreatic (124 aa).

The segment covering 1–13 has biased composition (basic and acidic residues); sequence KESAAAKFERQHM. The interval 1–23 is disordered; that stretch reads KESAAAKFERQHMDPSASSISSS. Residues Lys-7 and Arg-10 each contribute to the substrate site. His-12 functions as the Proton acceptor in the catalytic mechanism. 4 disulfide bridges follow: Cys-26-Cys-84, Cys-40-Cys-95, Cys-58-Cys-110, and Cys-65-Cys-72. Residue Asn-34 is glycosylated (N-linked (GlcNAc...) asparagine). Substrate contacts are provided by residues 41–45, Lys-66, and Arg-85; that span reads KPVNT. His-119 (proton donor) is an active-site residue.

The protein belongs to the pancreatic ribonuclease family. As to quaternary structure, monomer. Interacts with and forms tight 1:1 complexes with RNH1. Dimerization of two such complexes may occur. Interaction with RNH1 inhibits this protein. Pancreas.

It is found in the secreted. It carries out the reaction an [RNA] containing cytidine + H2O = an [RNA]-3'-cytidine-3'-phosphate + a 5'-hydroxy-ribonucleotide-3'-[RNA].. The catalysed reaction is an [RNA] containing uridine + H2O = an [RNA]-3'-uridine-3'-phosphate + a 5'-hydroxy-ribonucleotide-3'-[RNA].. In terms of biological role, endonuclease that catalyzes the cleavage of RNA on the 3' side of pyrimidine nucleotides. Acts on single-stranded and double-stranded RNA. The polypeptide is Ribonuclease pancreatic (RNASE1) (Alces alces alces (European moose)).